We begin with the raw amino-acid sequence, 267 residues long: Glutamate 5-kinase (267 aa).

Lys17 provides a ligand contact to ATP. The substrate site is built by Ser57, Asp144, and Asn156. ATP is bound by residues 176 to 177 (SD) and 218 to 224 (TGGMATK).

The protein belongs to the glutamate 5-kinase family.

It is found in the cytoplasm. The enzyme catalyses L-glutamate + ATP = L-glutamyl 5-phosphate + ADP. The protein operates within amino-acid biosynthesis; L-proline biosynthesis; L-glutamate 5-semialdehyde from L-glutamate: step 1/2. Catalyzes the transfer of a phosphate group to glutamate to form L-glutamate 5-phosphate. The chain is Glutamate 5-kinase from Clostridium acetobutylicum (strain ATCC 824 / DSM 792 / JCM 1419 / IAM 19013 / LMG 5710 / NBRC 13948 / NRRL B-527 / VKM B-1787 / 2291 / W).